We begin with the raw amino-acid sequence, 128 residues long: Large ribosomal subunit protein eL22 (128 aa).

This sequence belongs to the eukaryotic ribosomal protein eL22 family. As to quaternary structure, component of the large ribosomal subunit.

The protein resides in the cytoplasm. In terms of biological role, component of the large ribosomal subunit. The ribosome is a large ribonucleoprotein complex responsible for the synthesis of proteins in the cell. This chain is Large ribosomal subunit protein eL22 (rpl22), found in Xenopus tropicalis (Western clawed frog).